The chain runs to 114 residues: Putative movement protein (114 aa).

A helical membrane pass occupies residues Leu-27–Leu-47. The segment at Arg-79 to Phe-114 is disordered. Positions Gly-86 to Arg-97 are enriched in basic and acidic residues. Polar residues predominate over residues Gln-98–Phe-114.

This sequence belongs to the nanovirus movement protein family.

It localises to the host cell membrane. In terms of biological role, may transport viral genome to neighboring plant cells directly through plasmosdesmata, without any budding. The movement protein allows efficient cell to cell propagation, by bypassing the host cell wall barrier. In Faba bean necrotic yellows virus (isolate Syrian SV292-88) (FBNYV), this protein is Putative movement protein (DNA-M).